Reading from the N-terminus, the 252-residue chain is Proteasome subunit alpha type-7-1B (252 aa).

The protein belongs to the peptidase T1A family. As to quaternary structure, the 26S proteasome consists of a 20S proteasome core and two 19S regulatory subunits. The 20S proteasome core is composed of 28 subunits that are arranged in four stacked rings, resulting in a barrel-shaped structure. The two end rings are each formed by seven alpha subunits, and the two central rings are each formed by seven beta subunits. The catalytic chamber with the active sites is on the inside of the barrel. In terms of tissue distribution, testis specific.

It localises to the cytoplasm. The protein localises to the nucleus. Functionally, the proteasome is a multicatalytic proteinase complex which is characterized by its ability to cleave peptides with Arg, Phe, Tyr, Leu, and Glu adjacent to the leaving group at neutral or slightly basic pH. The proteasome has an ATP-dependent proteolytic activity. This is Proteasome subunit alpha type-7-1B (Prosalpha4T2) from Drosophila melanogaster (Fruit fly).